Reading from the N-terminus, the 344-residue chain is Aspartate-semialdehyde dehydrogenase (344 aa).

NADP(+) contacts are provided by residues 10–13 (TGQV) and 38–39 (RS). R101 serves as a coordination point for phosphate. C131 functions as the Acyl-thioester intermediate in the catalytic mechanism. Q158 lines the substrate pocket. Position 161-162 (161-162 (SG)) interacts with NADP(+). K228 serves as a coordination point for phosphate. R250 contributes to the substrate binding site. H257 acts as the Proton acceptor in catalysis. N326 contributes to the NADP(+) binding site.

It belongs to the aspartate-semialdehyde dehydrogenase family. As to quaternary structure, homodimer.

It carries out the reaction L-aspartate 4-semialdehyde + phosphate + NADP(+) = 4-phospho-L-aspartate + NADPH + H(+). It participates in amino-acid biosynthesis; L-lysine biosynthesis via DAP pathway; (S)-tetrahydrodipicolinate from L-aspartate: step 2/4. The protein operates within amino-acid biosynthesis; L-methionine biosynthesis via de novo pathway; L-homoserine from L-aspartate: step 2/3. It functions in the pathway amino-acid biosynthesis; L-threonine biosynthesis; L-threonine from L-aspartate: step 2/5. Its function is as follows. Catalyzes the NADPH-dependent formation of L-aspartate-semialdehyde (L-ASA) by the reductive dephosphorylation of L-aspartyl-4-phosphate. In Corynebacterium glutamicum (strain ATCC 13032 / DSM 20300 / JCM 1318 / BCRC 11384 / CCUG 27702 / LMG 3730 / NBRC 12168 / NCIMB 10025 / NRRL B-2784 / 534), this protein is Aspartate-semialdehyde dehydrogenase.